The chain runs to 108 residues: MVTQKIYIELKAFDSCLLDRSARSIILTAKRSGARVNGPIFFPRKIMKFIVNRSTHVDKKSREQFEIRTHKRLISLPKANSTIIQALMSLQLPAGVDVKVKVIGGSNG.

It belongs to the universal ribosomal protein uS10 family. As to quaternary structure, part of the 30S ribosomal subunit.

Its function is as follows. Involved in the binding of tRNA to the ribosomes. This is Small ribosomal subunit protein uS10 from Ehrlichia chaffeensis (strain ATCC CRL-10679 / Arkansas).